A 728-amino-acid polypeptide reads, in one-letter code: Sodium-dependent transporter snf-5 (728 aa).

Residues 1 to 84 are Cytoplasmic-facing; that stretch reads MADSGSNEEA…PEEEEEKRDG (84 aa). Residues 1 to 84 are disordered; it reads MADSGSNEEA…PEEEEEKRDG (84 aa). Low complexity-rich tracts occupy residues 29–50 and 60–73; these read QQVS…STQS and KNTT…TLDT. The helical transmembrane segment at 85–105 threads the bilayer; sequence FGNSFEFVLTSLGLAVGLGNI. Na(+)-binding residues include glycine 97, alanine 99, valine 100, and asparagine 104. Residues 106–119 lie on the Extracellular side of the membrane; sequence WRFPTRAYNNGGSA. A helical membrane pass occupies residues 120-140; it reads FLIPYLTCAFLFGLPAVYFEF. Residues 141 to 162 are Cytoplasmic-facing; the sequence is LTGQYQGKSPPVIFRRVRPILE. Residues 163–183 form a helical membrane-spanning segment; the sequence is GVGWMGVFVAALVAIYYIVIV. Residues 184 to 285 are Extracellular-facing; that stretch reads SWISIYMINI…PSSGMLDFGG (102 aa). An intrachain disulfide couples cysteine 204 to cysteine 214. Residues asparagine 210, asparagine 225, asparagine 232, asparagine 237, and asparagine 257 are each glycosylated (N-linked (GlcNAc...) asparagine). The chain crosses the membrane as a helical span at residues 286–306; the sequence is FNWPVFAAMSVCWLLTGLGIL. At 307–314 the chain is on the cytoplasmic side; sequence KGAKIMGK. A helical membrane pass occupies residues 315–335; sequence ISYVSVLVPYVLVVVLFINGV. The Extracellular segment spans residues 336 to 364; the sequence is FQDGSGVGLEMYFGTPNYTKLYEQDTWTE. Residue asparagine 352 is glycosylated (N-linked (GlcNAc...) asparagine). A helical membrane pass occupies residues 365–386; it reads ALKQLCFSLSVGHGGLISLSSY. Serine 372 is a binding site for Na(+). At 387-396 the chain is on the cytoplasmic side; that stretch reads SPKRNNIFRD. A helical transmembrane segment spans residues 397 to 417; sequence ALIVIIGDTTMSLVGGGAVFA. Over 418–451 the chain is Extracellular; that stretch reads TLGYLAKATGQDVKDVVKSGLSLAFVVYPEAMTR. The helical transmembrane segment at 452 to 472 threads the bilayer; that stretch reads MPVPWLWCFIFFLMLFLLGAS. Leucine 469 is a binding site for Na(+). The Cytoplasmic portion of the chain corresponds to 473–495; sequence TEIALVDVFCSCIYDQYPRFRNR. A helical transmembrane segment spans residues 496–516; that stretch reads KWIVVIAWCSVLYCIGLVFST. Topologically, residues 517 to 531 are extracellular; the sequence is RAGYYWFEMFDEYAA. A helical membrane pass occupies residues 532–552; it reads GFSSVCTVVCELLVMMYIYGF. Topologically, residues 553–578 are cytoplasmic; sequence RNVRDDITEVVGHARNKFTGAIGAHS. The chain crosses the membrane as a helical span at residues 579-599; the sequence is WYFTANWMVISPSIALILVGL. Residues 600–616 lie on the Extracellular side of the membrane; it reads SFVREYPYMGRHDIYPA. The chain crosses the membrane as a helical span at residues 617 to 637; the sequence is VFDIFGWFLSFLPVIIVPIFM. The Cytoplasmic segment spans residues 638-728; it reads LLNFIRCRNR…DTSSTYHQVY (91 aa). The segment covering 687-699 has biased composition (acidic residues); that stretch reads PWDEENVDLTDSE. The disordered stretch occupies residues 687-728; the sequence is PWDEENVDLTDSESESRNAASGDVPIDDVATIDTSSTYHQVY. Residues 718–728 show a composition bias toward polar residues; it reads IDTSSTYHQVY.

This sequence belongs to the sodium:neurotransmitter symporter (SNF) (TC 2.A.22) family. As to expression, expressed in the INT-9 cells and posterior cells of the alimentary canal of the intestine, gut epithelial cells, the pharynx of some worms, two cells of the rectal gland, and in DVA, DVB and DVC neurons and amphid sensory neurons ASI, ADF and ASK neurons.

The protein resides in the cell membrane. Functionally, sodium-dependent amino acid transporter that mediates the uptake of the L-enantiomers of various amino acids, including L-proline and L-methionine, and also of acidic amino acids such as L-glutamic acid and L-aspartic acid. May additionally have a role in potassium-dependent amino acid absorption. In response to the availability of amino acid nutrients, may play a role in dauer formation. May play a role in promoting fertility. The sequence is that of Sodium-dependent transporter snf-5 from Caenorhabditis elegans.